The sequence spans 273 residues: WIMGHMVNAIGQIDEFVNLGANSIETDVSFDDSANPQYTYHGVPCDCGRSCLKWENYNDFLKGLRSATTPGNSKYQSKLVLVVFDLKTGSLYDNQANEAGKKLAKNLLQHYWNNGNNGGRAYIVLSIPDLNHYPLIKGFTDTLTQEGHPELLDKVGFDFSGNDAIGDVANAYKKAGVTGHVWQSDGITNCLLRGLTRVREAVANRDSGKGYINKVYYWTVDKRASTRDALDAGVDGVMTNYPDVITDVMNEAAYKNKFRLATYEDNPWETFKK.

Residue His5 is part of the active site. Residues Glu25 and Asp27 each coordinate Mg(2+). The active-site Nucleophile is His41. 2 cysteine pairs are disulfide-bonded: Cys45–Cys51 and Cys47–Cys190. Asp85 provides a ligand contact to Mg(2+).

This sequence belongs to the arthropod phospholipase D family. Class II subfamily. Mg(2+) is required as a cofactor. As to expression, expressed by the venom gland.

Its subcellular location is the secreted. The enzyme catalyses an N-(acyl)-sphingosylphosphocholine = an N-(acyl)-sphingosyl-1,3-cyclic phosphate + choline. The catalysed reaction is an N-(acyl)-sphingosylphosphoethanolamine = an N-(acyl)-sphingosyl-1,3-cyclic phosphate + ethanolamine. It carries out the reaction a 1-acyl-sn-glycero-3-phosphocholine = a 1-acyl-sn-glycero-2,3-cyclic phosphate + choline. It catalyses the reaction a 1-acyl-sn-glycero-3-phosphoethanolamine = a 1-acyl-sn-glycero-2,3-cyclic phosphate + ethanolamine. Dermonecrotic toxins cleave the phosphodiester linkage between the phosphate and headgroup of certain phospholipids (sphingolipid and lysolipid substrates), forming an alcohol (often choline) and a cyclic phosphate. This toxin acts on sphingomyelin (SM). It may also act on ceramide phosphoethanolamine (CPE), lysophosphatidylcholine (LPC) and lysophosphatidylethanolamine (LPE), but not on lysophosphatidylserine (LPS), and lysophosphatidylglycerol (LPG). It acts by transphosphatidylation, releasing exclusively cyclic phosphate products as second products. Induces dermonecrosis, hemolysis, increased vascular permeability, edema, inflammatory response, and platelet aggregation. The sequence is that of Dermonecrotic toxin LspaSicTox-alphaIA2iii from Loxosceles spadicea (Recluse spider).